We begin with the raw amino-acid sequence, 504 residues long: Cobyric acid synthase (504 aa).

A GATase cobBQ-type domain is found at 254-442 (AIDVAVIRYP…MHDLFHNDMF (189 aa)). Residue C336 is the Nucleophile of the active site. H434 is a catalytic residue.

This sequence belongs to the CobB/CobQ family. CobQ subfamily.

Its pathway is cofactor biosynthesis; adenosylcobalamin biosynthesis. In terms of biological role, catalyzes amidations at positions B, D, E, and G on adenosylcobyrinic A,C-diamide. NH(2) groups are provided by glutamine, and one molecule of ATP is hydrogenolyzed for each amidation. The protein is Cobyric acid synthase of Anoxybacillus flavithermus (strain DSM 21510 / WK1).